We begin with the raw amino-acid sequence, 609 residues long: Chaperone protein DnaK (609 aa).

Phosphothreonine; by autocatalysis is present on Thr173. The segment covering 525-542 (ENISDEDKKNAEEKKDAL) has biased composition (basic and acidic residues). 2 disordered regions span residues 525–554 (ENIS…IDDI) and 574–609 (EQAQ…EDKK). Residues 574-587 (EQAQQAQQQGQEEQ) show a composition bias toward low complexity. Over residues 597–609 (ADFKEVKDDEDKK) the composition is skewed to basic and acidic residues.

It belongs to the heat shock protein 70 family.

Functionally, acts as a chaperone. The chain is Chaperone protein DnaK from Staphylococcus epidermidis (strain ATCC 35984 / DSM 28319 / BCRC 17069 / CCUG 31568 / BM 3577 / RP62A).